The primary structure comprises 103 residues: Large ribosomal subunit protein bL21 (103 aa).

Belongs to the bacterial ribosomal protein bL21 family. As to quaternary structure, part of the 50S ribosomal subunit. Contacts protein L20.

In terms of biological role, this protein binds to 23S rRNA in the presence of protein L20. The chain is Large ribosomal subunit protein bL21 from Borrelia garinii subsp. bavariensis (strain ATCC BAA-2496 / DSM 23469 / PBi) (Borreliella bavariensis).